The sequence spans 173 residues: Putative 2-oxo-4-hydroxy-4-carboxy-5-ureidoimidazoline decarboxylase (173 aa).

Catalysis depends on histidine 67, which acts as the Proton donor. Residues proline 68, 84–88 (SQREQ), and 119–123 (FVLAA) each bind substrate. Positions 171–173 (AKL) match the Microbody targeting signal motif.

This sequence belongs to the OHCU decarboxylase family. As to expression, apparently not expressed.

It localises to the peroxisome. It catalyses the reaction 5-hydroxy-2-oxo-4-ureido-2,5-dihydro-1H-imidazole-5-carboxylate + H(+) = (S)-allantoin + CO2. It participates in purine metabolism; urate degradation; (S)-allantoin from urate: step 3/3. Catalyzes the stereoselective decarboxylation of 2-oxo-4-hydroxy-4-carboxy-5-ureidoimidazoline (OHCU) to (S)-allantoin. The chain is Putative 2-oxo-4-hydroxy-4-carboxy-5-ureidoimidazoline decarboxylase (URAD) from Homo sapiens (Human).